Consider the following 302-residue polypeptide: Arginase (302 aa).

Mn(2+)-binding residues include His103, Asp126, His128, and Asp130. Substrate is bound by residues 128-132 (HGDLN), 139-141 (SGN), and Asp180. Mn(2+)-binding residues include Asp229 and Asp231. The substrate site is built by Thr243 and Glu274.

Belongs to the arginase family. Mn(2+) serves as cofactor.

The catalysed reaction is L-arginine + H2O = urea + L-ornithine. It functions in the pathway nitrogen metabolism; urea cycle; L-ornithine and urea from L-arginine: step 1/1. The polypeptide is Arginase (arg) (Staphylococcus aureus (strain COL)).